A 208-amino-acid chain; its full sequence is MSIVTKALNLVPMVVEQTSRGERAYDIYSRLLKERLIFLVGPIDDHMANVIVAQLLFLEADNPEKDISIYINSPGGVVTAGMAIYDTMQYIKPDVSTICVGQAASMGALLLASGAAGKRYALPNSRVMIHQPLGGFQGQATDIDIHAREILTLRSRLNEILAKHTGQSLETIARDTERDNFKSAVDAQAYGLVDQVLERRPEESIQPS.

Catalysis depends on Ser105, which acts as the Nucleophile. His130 is a catalytic residue.

It belongs to the peptidase S14 family. In terms of assembly, fourteen ClpP subunits assemble into 2 heptameric rings which stack back to back to give a disk-like structure with a central cavity, resembling the structure of eukaryotic proteasomes.

The protein resides in the cytoplasm. The catalysed reaction is Hydrolysis of proteins to small peptides in the presence of ATP and magnesium. alpha-casein is the usual test substrate. In the absence of ATP, only oligopeptides shorter than five residues are hydrolyzed (such as succinyl-Leu-Tyr-|-NHMec, and Leu-Tyr-Leu-|-Tyr-Trp, in which cleavage of the -Tyr-|-Leu- and -Tyr-|-Trp bonds also occurs).. In terms of biological role, cleaves peptides in various proteins in a process that requires ATP hydrolysis. Has a chymotrypsin-like activity. Plays a major role in the degradation of misfolded proteins. The protein is ATP-dependent Clp protease proteolytic subunit of Xanthomonas axonopodis pv. citri (strain 306).